The primary structure comprises 352 residues: Molybdenum import ATP-binding protein ModC (352 aa).

Positions 1–229 (MLQLDFHQQL…SALRPWLPKD (229 aa)) constitute an ABC transporter domain. 31 to 38 (GVSGAGKT) is an ATP binding site. In terms of domain architecture, Mop spans 289–352 (KSSIRNVLRA…AQIKSVSITA (64 aa)).

The protein belongs to the ABC transporter superfamily. Molybdate importer (TC 3.A.1.8) family. As to quaternary structure, the complex is composed of two ATP-binding proteins (ModC), two transmembrane proteins (ModB) and a solute-binding protein (ModA).

It localises to the cell inner membrane. It carries out the reaction molybdate(out) + ATP + H2O = molybdate(in) + ADP + phosphate + H(+). In terms of biological role, part of the ABC transporter complex ModABC involved in molybdenum import. Responsible for energy coupling to the transport system. In Pectobacterium atrosepticum (strain SCRI 1043 / ATCC BAA-672) (Erwinia carotovora subsp. atroseptica), this protein is Molybdenum import ATP-binding protein ModC.